The sequence spans 57 residues: Large ribosomal subunit protein bL33 (57 aa).

Belongs to the bacterial ribosomal protein bL33 family.

The sequence is that of Large ribosomal subunit protein bL33 from Akkermansia muciniphila (strain ATCC BAA-835 / DSM 22959 / JCM 33894 / BCRC 81048 / CCUG 64013 / CIP 107961 / Muc).